A 242-amino-acid chain; its full sequence is Pyridoxine 5'-phosphate synthase (242 aa).

Asn7 is a 3-amino-2-oxopropyl phosphate binding site. 9–10 lines the 1-deoxy-D-xylulose 5-phosphate pocket; that stretch reads DH. Arg18 is a 3-amino-2-oxopropyl phosphate binding site. Catalysis depends on His44, which acts as the Proton acceptor. 1-deoxy-D-xylulose 5-phosphate is bound by residues Arg46 and His51. Catalysis depends on Glu71, which acts as the Proton acceptor. A 1-deoxy-D-xylulose 5-phosphate-binding site is contributed by Thr101. The active-site Proton donor is the His192. Residues Gly193 and 214 to 215 contribute to the 3-amino-2-oxopropyl phosphate site; that span reads GH.

The protein belongs to the PNP synthase family. As to quaternary structure, homooctamer; tetramer of dimers.

The protein localises to the cytoplasm. The catalysed reaction is 3-amino-2-oxopropyl phosphate + 1-deoxy-D-xylulose 5-phosphate = pyridoxine 5'-phosphate + phosphate + 2 H2O + H(+). Its pathway is cofactor biosynthesis; pyridoxine 5'-phosphate biosynthesis; pyridoxine 5'-phosphate from D-erythrose 4-phosphate: step 5/5. Functionally, catalyzes the complicated ring closure reaction between the two acyclic compounds 1-deoxy-D-xylulose-5-phosphate (DXP) and 3-amino-2-oxopropyl phosphate (1-amino-acetone-3-phosphate or AAP) to form pyridoxine 5'-phosphate (PNP) and inorganic phosphate. The chain is Pyridoxine 5'-phosphate synthase from Synechocystis sp. (strain ATCC 27184 / PCC 6803 / Kazusa).